Consider the following 430-residue polypeptide: Enolase (430 aa).

Glutamine 167 provides a ligand contact to (2R)-2-phosphoglycerate. Glutamate 209 serves as the catalytic Proton donor. Mg(2+)-binding residues include aspartate 245, glutamate 286, and aspartate 313. Residues lysine 338, arginine 367, serine 368, and lysine 389 each coordinate (2R)-2-phosphoglycerate. Catalysis depends on lysine 338, which acts as the Proton acceptor.

Belongs to the enolase family. Requires Mg(2+) as cofactor.

The protein localises to the cytoplasm. The protein resides in the secreted. It localises to the cell surface. It carries out the reaction (2R)-2-phosphoglycerate = phosphoenolpyruvate + H2O. Its pathway is carbohydrate degradation; glycolysis; pyruvate from D-glyceraldehyde 3-phosphate: step 4/5. Functionally, catalyzes the reversible conversion of 2-phosphoglycerate (2-PG) into phosphoenolpyruvate (PEP). It is essential for the degradation of carbohydrates via glycolysis. This Synechococcus sp. (strain WH7803) protein is Enolase.